Here is a 334-residue protein sequence, read N- to C-terminus: Stabilizer of axonemal microtubules 3 (334 aa).

Disordered regions lie at residues 81 to 105 (AYVPKTHGGPCAQPRAPEPADPTRT), 128 to 153 (YQSSETRAQYTGSPSGDPRAPEYFGP), and 233 to 260 (QVWSHGPQRPPCPRSSRPPRPPRVRVPR). The segment covering 128 to 141 (YQSSETRAQYTGSP) has biased composition (polar residues). A compositionally biased stretch (pro residues) spans 240–251 (QRPPCPRSSRPP).

The polypeptide is Stabilizer of axonemal microtubules 3 (Homo sapiens (Human)).